The sequence spans 367 residues: UDP-N-acetylglucosamine--N-acetylmuramyl-(pentapeptide) pyrophosphoryl-undecaprenol N-acetylglucosamine transferase (367 aa).

UDP-N-acetyl-alpha-D-glucosamine contacts are provided by residues 15 to 17 (TGG), Asn127, Arg163, Ser191, Ile249, and Gln294.

Belongs to the glycosyltransferase 28 family. MurG subfamily.

It localises to the cell inner membrane. The catalysed reaction is di-trans,octa-cis-undecaprenyl diphospho-N-acetyl-alpha-D-muramoyl-L-alanyl-D-glutamyl-meso-2,6-diaminopimeloyl-D-alanyl-D-alanine + UDP-N-acetyl-alpha-D-glucosamine = di-trans,octa-cis-undecaprenyl diphospho-[N-acetyl-alpha-D-glucosaminyl-(1-&gt;4)]-N-acetyl-alpha-D-muramoyl-L-alanyl-D-glutamyl-meso-2,6-diaminopimeloyl-D-alanyl-D-alanine + UDP + H(+). It participates in cell wall biogenesis; peptidoglycan biosynthesis. Cell wall formation. Catalyzes the transfer of a GlcNAc subunit on undecaprenyl-pyrophosphoryl-MurNAc-pentapeptide (lipid intermediate I) to form undecaprenyl-pyrophosphoryl-MurNAc-(pentapeptide)GlcNAc (lipid intermediate II). The sequence is that of UDP-N-acetylglucosamine--N-acetylmuramyl-(pentapeptide) pyrophosphoryl-undecaprenol N-acetylglucosamine transferase from Burkholderia orbicola (strain MC0-3).